The sequence spans 629 residues: ATP-dependent DNA helicase II subunit 2 (629 aa).

The Ku domain maps to 254 to 476 (SGLNRKTAVE…GHQIDELMEQ (223 aa)). The span at 608–620 (DLETLLKRGEQHS) shows a compositional bias: basic and acidic residues. The disordered stretch occupies residues 608-629 (DLETLLKRGEQHSRGSPNNSNN).

It belongs to the ku80 family. In terms of assembly, heterodimer of YKU70/HDF1 and YKU80/HDF2. Interacts with SIR4.

It localises to the nucleus. It is found in the chromosome. The protein localises to the telomere. It carries out the reaction ATP + H2O = ADP + phosphate + H(+). In terms of biological role, single-stranded DNA-dependent ATP-dependent helicase. Involved in non-homologous end joining (NHEJ) DNA double strand break repair. DNA-binding is sequence-independent but has a high affinity to nicks in double-stranded DNA and to the ends of duplex DNA. Binds to naturally occurring chromosomal ends, and therefore provides chromosomal end protection. Appears to have a role in recruitment of telomerase and CDC13 to the telomere and the subsequent telomere elongation. Required also for telomere recombination to repair telomeric ends in the absence of telomerase. KU70, of the KU70/KU80 heterodimer, binds to the stem loop of TLC1, the RNA component of telomerase. Involved in telomere maintenance. Interacts with telomeric repeats and subtelomeric sequences thereby controlling telomere length and protecting against subtelomeric rearrangement. Maintains telomeric chromatin, which is involved in silencing the expression of genes located at the telomere. Required for mating-type switching. This Saccharomyces cerevisiae (strain ATCC 204508 / S288c) (Baker's yeast) protein is ATP-dependent DNA helicase II subunit 2 (YKU80).